The primary structure comprises 353 residues: MSEPLKPRIDFAEPLKEEPTSAFKAQQTFSEAESRTFAPAAIDERPEDEGVAEAAVDAALRPKRSLWRKMVMGGLALFGASVVGQGIQWTMNAWQTQDWVALGGCAAGALIVGAGVGSVVTEWRRLWRLRQRAHERDEARELLHSHSVGKGRAFCEKLAQQAGIDQSHPALQRWYAAIHETQNDREIVGLYAHLVQPVLDAQARREISRFAAESTLMIAVSPLALVDMAFIAWRNLRLINRIATLYGIELGYYSRLRLFRLVLLNIAFAGASELVREVGMDWMSQDLAARLSTRAAQGIGAGLLTARLGIKAMELCRPLPWIDNDKPRLGDFRRQLIGQLKETLQKSKSSPEK.

Residues 1 to 19 are compositionally biased toward basic and acidic residues; the sequence is MSEPLKPRIDFAEPLKEEP. The interval 1 to 35 is disordered; it reads MSEPLKPRIDFAEPLKEEPTSAFKAQQTFSEAESR. Transmembrane regions (helical) follow at residues 70–90, 100–120, and 213–233; these read MVMGGLALFGASVVGQGIQWT, VALGGCAAGALIVGAGVGSVV, and ESTLMIAVSPLALVDMAFIAW.

This sequence belongs to the UPF0283 family.

The protein localises to the cell inner membrane. This chain is UPF0283 membrane protein YcjF, found in Salmonella agona (strain SL483).